The following is a 755-amino-acid chain: Tryptophan 2-monooxygenase (755 aa).

FMN contacts are provided by S247, E267, K275, and R295. Residue R295 coordinates substrate.

It belongs to the tryptophan 2-monooxygenase family. FMN serves as cofactor.

The enzyme catalyses L-tryptophan + O2 = indole-3-acetamide + CO2 + H2O. The protein operates within plant hormone metabolism; auxin biosynthesis. The chain is Tryptophan 2-monooxygenase (tms1) from Rhizobium radiobacter (Agrobacterium tumefaciens).